A 564-amino-acid chain; its full sequence is Phenylalanine--tRNA ligase beta subunit (564 aa).

Residues 286–362 (YFQNMLEVNV…IGMGLDSFKP (77 aa)) form the B5 domain. 4 residues coordinate Mg(2+): Asp340, Asp346, Glu349, and Glu350.

The protein belongs to the phenylalanyl-tRNA synthetase beta subunit family. Type 2 subfamily. Tetramer of two alpha and two beta subunits. Mg(2+) serves as cofactor.

It is found in the cytoplasm. The catalysed reaction is tRNA(Phe) + L-phenylalanine + ATP = L-phenylalanyl-tRNA(Phe) + AMP + diphosphate + H(+). In Borrelia turicatae (strain 91E135), this protein is Phenylalanine--tRNA ligase beta subunit.